A 350-amino-acid chain; its full sequence is UDP-glucose 4-epimerase GEPI48 (350 aa).

5 to 36 (TVLVTGGAGYIGSHTVLQLLLGGFKAVVVDNL) is a binding site for NAD(+). Substrate is bound at residue S130. The Proton acceptor role is filled by Y154.

The protein belongs to the NAD(P)-dependent epimerase/dehydratase family. NAD(+) is required as a cofactor.

The catalysed reaction is UDP-alpha-D-glucose = UDP-alpha-D-galactose. It functions in the pathway carbohydrate metabolism; galactose metabolism. This chain is UDP-glucose 4-epimerase GEPI48, found in Cyamopsis tetragonoloba (Guar).